A 234-amino-acid polypeptide reads, in one-letter code: Orotate phosphoribosyltransferase (234 aa).

Residue Lys30 participates in 5-phospho-alpha-D-ribose 1-diphosphate binding. Orotate is bound at residue 38–39 (FF). 5-phospho-alpha-D-ribose 1-diphosphate-binding positions include 80-81 (YK), Arg110, Lys111, Lys114, His116, and 136-144 (DDVITAGTA). Orotate-binding residues include Thr140 and Arg168.

This sequence belongs to the purine/pyrimidine phosphoribosyltransferase family. PyrE subfamily. As to quaternary structure, homodimer.

The catalysed reaction is orotidine 5'-phosphate + diphosphate = orotate + 5-phospho-alpha-D-ribose 1-diphosphate. Its pathway is pyrimidine metabolism; UMP biosynthesis via de novo pathway; UMP from orotate: step 1/2. Catalyzes the transfer of a ribosyl phosphate group from 5-phosphoribose 1-diphosphate to orotate, leading to the formation of orotidine monophosphate (OMP). This Metarhizium anisopliae (Entomophthora anisopliae) protein is Orotate phosphoribosyltransferase (URA5).